The chain runs to 338 residues: Glyceraldehyde-3-phosphate dehydrogenase (338 aa).

NAD(+) contacts are provided by residues 12–13, Asp-34, and Arg-79; that span reads RI. Residues 150–152, Thr-181, 210–211, and Arg-233 contribute to the D-glyceraldehyde 3-phosphate site; these read SCT and TG. Catalysis depends on Cys-151, which acts as the Nucleophile. Residue Asn-315 coordinates NAD(+).

It belongs to the glyceraldehyde-3-phosphate dehydrogenase family. In terms of assembly, homotetramer.

It localises to the cytoplasm. It carries out the reaction D-glyceraldehyde 3-phosphate + phosphate + NAD(+) = (2R)-3-phospho-glyceroyl phosphate + NADH + H(+). The protein operates within carbohydrate degradation; glycolysis; pyruvate from D-glyceraldehyde 3-phosphate: step 1/5. The chain is Glyceraldehyde-3-phosphate dehydrogenase (gpd-1) from Neurospora crassa (strain ATCC 24698 / 74-OR23-1A / CBS 708.71 / DSM 1257 / FGSC 987).